We begin with the raw amino-acid sequence, 874 residues long: Valine--tRNA ligase (874 aa).

Residues 1 to 10 (MTENSQQQPP) are compositionally biased toward polar residues. The segment at 1–23 (MTENSQQQPPASEPELPTQYAPA) is disordered. Residues 57 to 67 (PNVTGSLHLGH) carry the 'HIGH' region motif. Positions 531 to 535 (KMSKS) match the 'KMSKS' region motif. Lys534 provides a ligand contact to ATP. A coiled-coil region spans residues 806 to 871 (IDIVAERKRL…ARIQAQLDRM (66 aa)).

Belongs to the class-I aminoacyl-tRNA synthetase family. ValS type 1 subfamily. In terms of assembly, monomer.

It localises to the cytoplasm. It carries out the reaction tRNA(Val) + L-valine + ATP = L-valyl-tRNA(Val) + AMP + diphosphate. Functionally, catalyzes the attachment of valine to tRNA(Val). As ValRS can inadvertently accommodate and process structurally similar amino acids such as threonine, to avoid such errors, it has a 'posttransfer' editing activity that hydrolyzes mischarged Thr-tRNA(Val) in a tRNA-dependent manner. The chain is Valine--tRNA ligase from Streptomyces avermitilis (strain ATCC 31267 / DSM 46492 / JCM 5070 / NBRC 14893 / NCIMB 12804 / NRRL 8165 / MA-4680).